The primary structure comprises 129 residues: Small ribosomal subunit protein uS9 (129 aa).

A disordered region spans residues 110–129 (VERKKYGKKKARKSFQFSKR). Basic residues predominate over residues 114-129 (KYGKKKARKSFQFSKR).

Belongs to the universal ribosomal protein uS9 family.

In Chlorobaculum parvum (strain DSM 263 / NCIMB 8327) (Chlorobium vibrioforme subsp. thiosulfatophilum), this protein is Small ribosomal subunit protein uS9.